Reading from the N-terminus, the 1055-residue chain is Type I restriction enzyme HindI endonuclease subunit (1055 aa).

The Helicase ATP-binding domain occupies 287–468 (TSEKGDRRIG…QDVFGRYVSI (182 aa)).

Belongs to the HsdR family. In terms of assembly, the type I restriction/modification system is composed of three polypeptides R, M and S; the restriction enzyme has stoichiometry R(2)M(2)S(1) while the methyltransferase is M(2)S(1).

The catalysed reaction is Endonucleolytic cleavage of DNA to give random double-stranded fragments with terminal 5'-phosphates, ATP is simultaneously hydrolyzed.. Its function is as follows. The restriction (R) subunit of a type I restriction enzyme that recognizes 5'-RAACN(5)TAG-3' and cleaves a random distance away. Subunit R is required for both nuclease and ATPase activities, but not for modification. After locating a non-methylated recognition site, the enzyme complex serves as a molecular motor that translocates DNA in an ATP-dependent manner until a collision occurs that triggers cleavage. The chain is Type I restriction enzyme HindI endonuclease subunit from Haemophilus influenzae (strain ATCC 51907 / DSM 11121 / KW20 / Rd).